The following is a 438-amino-acid chain: MLDILLLRKDPASAIARLETRQKPQPFLNLSAFQALEAERKTLQTRTEELQSRRNQLSRQIGISLGQGDPGSADTARAQVAASKLELAQSAARLEQIQAELQTMLEAVPNLPHDSVPVGADASGNIELRRWGQPASPAFALKDHVDIGRPLGLDLDLGVKLSGARFAVMKGQIARLHRALAQFMLDVQTGEHGYTECYVPYAVNAESLKGTGQLPKFESDLFSTKKGGQDGEPVPDNTALYLIPTSEVPLTNFVRGLVLTEAELPIRLTAHTPCFRSEAGSYGRDTRGMIRQHQFDKVEMVQIVHPATSYQALEEMTGHAEALLQKLGLPYRVMSLCTGDMGFGAAKTYDLEVWLPAQNSYREISSVSNCEAFQARRLQARFKNAQGKNEPVHTLNGSGLAVGRTLVALLENYQQADGSVTIPPALRPYMAGIAALRP.

245 to 247 (TSE) contributes to the L-serine binding site. Position 276 to 278 (276 to 278 (RSE)) interacts with ATP. Position 299 (Glu299) interacts with L-serine. Position 363–366 (363–366 (EISS)) interacts with ATP. Ser398 is an L-serine binding site.

Belongs to the class-II aminoacyl-tRNA synthetase family. Type-1 seryl-tRNA synthetase subfamily. As to quaternary structure, homodimer. The tRNA molecule binds across the dimer.

The protein resides in the cytoplasm. The enzyme catalyses tRNA(Ser) + L-serine + ATP = L-seryl-tRNA(Ser) + AMP + diphosphate + H(+). The catalysed reaction is tRNA(Sec) + L-serine + ATP = L-seryl-tRNA(Sec) + AMP + diphosphate + H(+). Its pathway is aminoacyl-tRNA biosynthesis; selenocysteinyl-tRNA(Sec) biosynthesis; L-seryl-tRNA(Sec) from L-serine and tRNA(Sec): step 1/1. In terms of biological role, catalyzes the attachment of serine to tRNA(Ser). Is also able to aminoacylate tRNA(Sec) with serine, to form the misacylated tRNA L-seryl-tRNA(Sec), which will be further converted into selenocysteinyl-tRNA(Sec). This is Serine--tRNA ligase from Verminephrobacter eiseniae (strain EF01-2).